Here is a 207-residue protein sequence, read N- to C-terminus: Ubiquitin-conjugating enzyme E2 E3 (207 aa).

Residues 1–10 (MSSDRQRSDD) are compositionally biased toward basic and acidic residues. Residues 1–63 (MSSDRQRSDD…KTTAKLSTSA (63 aa)) are disordered. Residue S2 is modified to N-acetylserine. The residue at position 8 (S8) is a Phosphoserine. Residues 50–63 (KLSSKTTAKLSTSA) show a composition bias toward low complexity. The UBC core domain maps to 61–207 (TSAKRIQKEL…ARQWTKRYAT (147 aa)). C145 serves as the catalytic Glycyl thioester intermediate.

Belongs to the ubiquitin-conjugating enzyme family. In terms of assembly, the ubiquitin-loaded form interacts specifically with importin-11 (IPO11), leading to its import into the nucleus. Interacts with NEDD4L.

Its subcellular location is the nucleus. The protein resides in the cytoplasm. The catalysed reaction is S-ubiquitinyl-[E1 ubiquitin-activating enzyme]-L-cysteine + [E2 ubiquitin-conjugating enzyme]-L-cysteine = [E1 ubiquitin-activating enzyme]-L-cysteine + S-ubiquitinyl-[E2 ubiquitin-conjugating enzyme]-L-cysteine.. Its pathway is protein modification; protein ubiquitination. Its function is as follows. Accepts ubiquitin from the E1 complex and catalyzes its covalent attachment to other proteins. In vitro catalyzes 'Lys-11'- and 'Lys-48'-, as well as 'Lys-63'-linked polyubiquitination. Participates in the regulation of transepithelial sodium transport in renal cells. This chain is Ubiquitin-conjugating enzyme E2 E3 (UBE2E3), found in Bos taurus (Bovine).